Here is a 120-residue protein sequence, read N- to C-terminus: Transcription elongation factor SPT4 (120 aa).

The interval 1–39 (MAASIPSDLRNLRACLLCSLIKSVDAFQTDGCENCDEVL) is interaction with spt-5. The C4-type zinc-finger motif lies at 15 to 35 (CLLCSLIKSVDAFQTDGCENC).

The protein belongs to the SPT4 family. Interacts with spt-5 to form DSIF. DSIF interacts with RNA polymerase II and with the positive transcription elongation factor b complex (P-TEFb complex), which is composed of cdk-9 and cyclin-T.

The protein resides in the nucleus. In terms of biological role, may function as a component of the DRB sensitivity-inducing factor complex (DSIF complex), which regulates transcription elongation by RNA polymerase II. DSIF may enhance transcriptional pausing at sites proximal to the promoter, which may in turn facilitate the assembly of an elongation competent RNA polymerase II complex. The sequence is that of Transcription elongation factor SPT4 (spt-4) from Caenorhabditis briggsae.